The chain runs to 216 residues: Uracil phosphoribosyltransferase (216 aa).

5-phospho-alpha-D-ribose 1-diphosphate contacts are provided by residues Arg-84, Arg-109, and Asp-137–Ser-145. Uracil is bound by residues Ile-202 and Gly-207 to Ala-209. Asp-208 provides a ligand contact to 5-phospho-alpha-D-ribose 1-diphosphate.

Belongs to the UPRTase family. Mg(2+) serves as cofactor.

It carries out the reaction UMP + diphosphate = 5-phospho-alpha-D-ribose 1-diphosphate + uracil. It participates in pyrimidine metabolism; UMP biosynthesis via salvage pathway; UMP from uracil: step 1/1. Allosterically activated by GTP. In terms of biological role, catalyzes the conversion of uracil and 5-phospho-alpha-D-ribose 1-diphosphate (PRPP) to UMP and diphosphate. This Nostoc sp. (strain PCC 7120 / SAG 25.82 / UTEX 2576) protein is Uracil phosphoribosyltransferase.